Here is a 1123-residue protein sequence, read N- to C-terminus: Phytochrome A (1123 aa).

Low complexity predominate over residues 1 to 14; it reads MSSSRPSQSSTTSS. Residues 1–20 are disordered; it reads MSSSRPSQSSTTSSRSKHSA. The GAF domain occupies 218 to 401; that stretch reads SMERLCDTMV…VFAILVNKEL (184 aa). C323 serves as a coordination point for phytochromobilin. Positions 617 to 687 constitute a PAS 1 domain; it reads VTAEMVRLIE…KMLELALQGQ (71 aa). The PAC domain maps to 690 to 746; that stretch reads RNVEFEIKTHGPSRDSSPISLIVNACASKDVRDSVVGVCFIAQDITGQKSIMDKFTR. The 75-residue stretch at 747-821 folds into the PAS 2 domain; sequence IEGDYRAIIQ…KNQEAFVNFG (75 aa). In terms of domain architecture, Histidine kinase spans 901–1118; sequence YIRRQIRNPL…TFIISVELAV (218 aa).

The protein belongs to the phytochrome family. As to quaternary structure, homodimer. Contains one covalently linked phytochromobilin chromophore.

Regulatory photoreceptor which exists in two forms that are reversibly interconvertible by light: the Pr form that absorbs maximally in the red region of the spectrum and the Pfr form that absorbs maximally in the far-red region. Photoconversion of Pr to Pfr induces an array of morphogenic responses, whereas reconversion of Pfr to Pr cancels the induction of those responses. Pfr controls the expression of a number of nuclear genes including those encoding the small subunit of ribulose-bisphosphate carboxylase, chlorophyll A/B binding protein, protochlorophyllide reductase, rRNA, etc. It also controls the expression of its own gene(s) in a negative feedback fashion. The sequence is that of Phytochrome A (PHYA) from Solanum tuberosum (Potato).